Reading from the N-terminus, the 390-residue chain is Chorismate synthase (390 aa).

NADP(+)-binding residues include R39 and R45. FMN contacts are provided by residues 132-134 (RSS), 253-254 (NA), G298, 313-317 (KPIPT), and R339.

It belongs to the chorismate synthase family. As to quaternary structure, homotetramer. FMNH2 is required as a cofactor.

The catalysed reaction is 5-O-(1-carboxyvinyl)-3-phosphoshikimate = chorismate + phosphate. It participates in metabolic intermediate biosynthesis; chorismate biosynthesis; chorismate from D-erythrose 4-phosphate and phosphoenolpyruvate: step 7/7. Catalyzes the anti-1,4-elimination of the C-3 phosphate and the C-6 proR hydrogen from 5-enolpyruvylshikimate-3-phosphate (EPSP) to yield chorismate, which is the branch point compound that serves as the starting substrate for the three terminal pathways of aromatic amino acid biosynthesis. This reaction introduces a second double bond into the aromatic ring system. This Shouchella clausii (strain KSM-K16) (Alkalihalobacillus clausii) protein is Chorismate synthase.